Consider the following 893-residue polypeptide: Translation initiation factor IF-2 (893 aa).

Residues M1–G266 form a disordered region. Residues P59–P70 are compositionally biased toward low complexity. Residues A71–R92 are compositionally biased toward pro residues. A compositionally biased stretch (low complexity) spans P93–S104. Composition is skewed to basic and acidic residues over residues A128 to S148 and A155 to R196. The segment covering P197 to A226 has biased composition (low complexity). The tr-type G domain maps to P389–K560. The segment at G398 to T405 is G1. G398–T405 provides a ligand contact to GTP. The interval G423–H427 is G2. Residues D446–G449 form a G3 region. GTP contacts are provided by residues D446–H450 and N500–D503. Positions N500–D503 are G4. The interval S536 to K538 is G5.

It belongs to the TRAFAC class translation factor GTPase superfamily. Classic translation factor GTPase family. IF-2 subfamily.

Its subcellular location is the cytoplasm. One of the essential components for the initiation of protein synthesis. Protects formylmethionyl-tRNA from spontaneous hydrolysis and promotes its binding to the 30S ribosomal subunits. Also involved in the hydrolysis of GTP during the formation of the 70S ribosomal complex. The sequence is that of Translation initiation factor IF-2 from Rhodopseudomonas palustris (strain BisA53).